Here is a 223-residue protein sequence, read N- to C-terminus: Phosphoribosylformylglycinamidine synthase subunit PurQ (223 aa).

One can recognise a Glutamine amidotransferase type-1 domain in the interval 2 to 223; the sequence is KFAVIQFPGS…ASVLKNFVGK (222 aa). Cys86 serves as the catalytic Nucleophile. Catalysis depends on residues His195 and Glu197.

As to quaternary structure, part of the FGAM synthase complex composed of 1 PurL, 1 PurQ and 2 PurS subunits.

It localises to the cytoplasm. It catalyses the reaction N(2)-formyl-N(1)-(5-phospho-beta-D-ribosyl)glycinamide + L-glutamine + ATP + H2O = 2-formamido-N(1)-(5-O-phospho-beta-D-ribosyl)acetamidine + L-glutamate + ADP + phosphate + H(+). The catalysed reaction is L-glutamine + H2O = L-glutamate + NH4(+). The protein operates within purine metabolism; IMP biosynthesis via de novo pathway; 5-amino-1-(5-phospho-D-ribosyl)imidazole from N(2)-formyl-N(1)-(5-phospho-D-ribosyl)glycinamide: step 1/2. Part of the phosphoribosylformylglycinamidine synthase complex involved in the purines biosynthetic pathway. Catalyzes the ATP-dependent conversion of formylglycinamide ribonucleotide (FGAR) and glutamine to yield formylglycinamidine ribonucleotide (FGAM) and glutamate. The FGAM synthase complex is composed of three subunits. PurQ produces an ammonia molecule by converting glutamine to glutamate. PurL transfers the ammonia molecule to FGAR to form FGAM in an ATP-dependent manner. PurS interacts with PurQ and PurL and is thought to assist in the transfer of the ammonia molecule from PurQ to PurL. This Lactococcus lactis subsp. lactis (strain IL1403) (Streptococcus lactis) protein is Phosphoribosylformylglycinamidine synthase subunit PurQ.